Consider the following 277-residue polypeptide: uncharacterized protein (277 aa).

Residues 256–277 form a disordered region; the sequence is HTTTTTTSPSFTIPSNSSKGVS.

In terms of biological role, this protein may be involved in virus assembly. Essential for virus function. This is an uncharacterized protein from Saccharolobus solfataricus (Sulfolobus solfataricus).